We begin with the raw amino-acid sequence, 61 residues long: Alpha-conotoxin EIIA (61 aa).

The signal sequence occupies residues Met1 to Ser16. The propeptide occupies Phe17 to Pro40. At Gln43 the chain carries Pyrrolidone carboxylic acid. At Pro45 the chain carries Hydroxyproline. Disulfide bonds link Cys47–Cys53 and Cys48–Cys58. Cys58 is modified (cysteine amide).

Belongs to the conotoxin A superfamily. Expressed by the venom duct.

It is found in the secreted. In terms of biological role, alpha-conotoxins bind to the nicotinic acetylcholine receptors (nAChR) and inhibit them. This peptide potently blocks muscular nicotinic acetylcholine receptor (CHRNA1-CHRNB1-CHRNG-CHRND), and has no effect on neuronal receptors. It is able to totally displace [125I]-Bgtx from the Torpedo receptor with a complete inhibition in the high micromolar range. It produces a biphasic inhibition curve which fits nicely with a two-site model (Ki of 0.46 and 105 nM). This chain is Alpha-conotoxin EIIA, found in Conus ermineus (Agate cone).